The following is a 224-amino-acid chain: Uracil-DNA glycosylase (224 aa).

D62 serves as the catalytic Proton acceptor.

The protein belongs to the uracil-DNA glycosylase (UDG) superfamily. UNG family.

Its subcellular location is the cytoplasm. The enzyme catalyses Hydrolyzes single-stranded DNA or mismatched double-stranded DNA and polynucleotides, releasing free uracil.. Its function is as follows. Excises uracil residues from the DNA which can arise as a result of misincorporation of dUMP residues by DNA polymerase or due to deamination of cytosine. The protein is Uracil-DNA glycosylase of Aliivibrio fischeri (strain ATCC 700601 / ES114) (Vibrio fischeri).